The following is a 253-amino-acid chain: 5'/3'-nucleotidase SurE (253 aa).

A divalent metal cation is bound by residues Asp-8, Asp-9, Ser-39, and Asn-92.

This sequence belongs to the SurE nucleotidase family. A divalent metal cation is required as a cofactor.

It localises to the cytoplasm. It catalyses the reaction a ribonucleoside 5'-phosphate + H2O = a ribonucleoside + phosphate. The catalysed reaction is a ribonucleoside 3'-phosphate + H2O = a ribonucleoside + phosphate. The enzyme catalyses [phosphate](n) + H2O = [phosphate](n-1) + phosphate + H(+). In terms of biological role, nucleotidase with a broad substrate specificity as it can dephosphorylate various ribo- and deoxyribonucleoside 5'-monophosphates and ribonucleoside 3'-monophosphates with highest affinity to 3'-AMP. Also hydrolyzes polyphosphate (exopolyphosphatase activity) with the preference for short-chain-length substrates (P20-25). Might be involved in the regulation of dNTP and NTP pools, and in the turnover of 3'-mononucleotides produced by numerous intracellular RNases (T1, T2, and F) during the degradation of various RNAs. The sequence is that of 5'/3'-nucleotidase SurE from Erwinia tasmaniensis (strain DSM 17950 / CFBP 7177 / CIP 109463 / NCPPB 4357 / Et1/99).